The following is a 1479-amino-acid chain: Chromosome partition protein MukB (1479 aa).

34 to 41 (GGNGAGKS) is an ATP binding site. Coiled-coil stretches lie at residues 337–418 (LNLV…QYQQ), 511–603 (QAER…RAPV), 780–810 (RAAREMRLESLRDEREALAEQYATLSFDVQK), 847–1116 (ELDR…AKAG), and 1206–1265 (DDPV…LQAV). The segment at 666–783 (PGGSEDPRLN…EVPLFGRAAR (118 aa)) is flexible hinge.

It belongs to the SMC family. MukB subfamily. Homodimerization via its hinge domain. Binds to DNA via its C-terminal region. Interacts, and probably forms a ternary complex, with MukE and MukF via its C-terminal region. The complex formation is stimulated by calcium or magnesium. Interacts with tubulin-related protein FtsZ.

It is found in the cytoplasm. The protein resides in the nucleoid. Plays a central role in chromosome condensation, segregation and cell cycle progression. Functions as a homodimer, which is essential for chromosome partition. Involved in negative DNA supercoiling in vivo, and by this means organize and compact chromosomes. May achieve or facilitate chromosome segregation by condensation DNA from both sides of a centrally located replisome during cell division. This chain is Chromosome partition protein MukB, found in Pectobacterium carotovorum subsp. carotovorum (strain PC1).